The primary structure comprises 469 residues: MNPNQKIITIGSICMVVGIISLILQIGNIISIWISHSIQTGSQNHTGICNQNIITYKNSTWVNQTYVNISNTNVVAGQDTTSVILTGNSSLCPIRGWAIYSKDNSIRIGSKGDVFVIREPFISCSHLECRTFFLTQGALLNDRHSNGTVKDRSPYRALMSCPVGEAPSPYNSRFESVAWSASACHDGMGWLTIGISGPDNGAVAVLKYNGIITETIKSWRKKILRTQESECACVNGSCFTIMTDGPSNGLASYKIFKIEKGKVTKSIELNAPNSHYEECSCYPDTGKVMCVCRDNWHGSNRPWVSFDQNLDYQIGYICSGVFGDNPRPKDGTGSCGPVYVDGANGVKGFSYRYGNGVWIGRTKSNSSRHGFEMIWDPNGWTETDSKFSVRQDVVAMTDWSGYSGSFVQHPELTGLDCMRPCFWVELIRGRPKENTIWTSGSSISFCGVNSDTVDWSWPDGAELPFTIDK.

Topologically, residues 1 to 6 (MNPNQK) are intravirion. The chain crosses the membrane as a helical span at residues 7–27 (IITIGSICMVVGIISLILQIG). Residues 11 to 33 (GSICMVVGIISLILQIGNIISIW) form an involved in apical transport and lipid raft association region. Residues 28–469 (NIISIWISHS…GAELPFTIDK (442 aa)) are Virion surface-facing. Positions 36-90 (HSIQTGSQNHTGICNQNIITYKNSTWVNQTYVNISNTNVVAGQDTTSVILTGNSS) are hypervariable stalk region. Residues Asn-44, Asn-58, Asn-63, Asn-68, and Asn-88 are each glycosylated (N-linked (GlcNAc...) asparagine; by host). The tract at residues 91 to 469 (LCPIRGWAIY…GAELPFTIDK (379 aa)) is head of neuraminidase. 8 disulfides stabilise this stretch: Cys-92/Cys-417, Cys-124/Cys-129, Cys-184/Cys-231, Cys-233/Cys-238, Cys-279/Cys-292, Cys-281/Cys-290, Cys-318/Cys-335, and Cys-421/Cys-446. Arg-118 provides a ligand contact to substrate. Asn-146 carries N-linked (GlcNAc...) asparagine; by host glycosylation. The active-site Proton donor/acceptor is the Asp-151. Residue Arg-152 participates in substrate binding. Asn-235 carries an N-linked (GlcNAc...) asparagine; by host glycan. Substrate is bound at residue 277-278 (EE). Arg-293 is a substrate binding site. Residues Asp-294, Gly-298, Asp-324, and Asn-344 each coordinate Ca(2+). The N-linked (GlcNAc...) asparagine; by host glycan is linked to Asn-365. Position 368 (Arg-368) interacts with substrate. Residue Tyr-402 is the Nucleophile of the active site.

Belongs to the glycosyl hydrolase 34 family. As to quaternary structure, homotetramer. Ca(2+) serves as cofactor. N-glycosylated.

It is found in the virion membrane. The protein localises to the host apical cell membrane. It carries out the reaction Hydrolysis of alpha-(2-&gt;3)-, alpha-(2-&gt;6)-, alpha-(2-&gt;8)- glycosidic linkages of terminal sialic acid residues in oligosaccharides, glycoproteins, glycolipids, colominic acid and synthetic substrates.. Inhibited by the neuraminidase inhibitors zanamivir (Relenza) and oseltamivir (Tamiflu). These drugs interfere with the release of progeny virus from infected cells and are effective against all influenza strains. Resistance to neuraminidase inhibitors is quite rare. Its function is as follows. Catalyzes the removal of terminal sialic acid residues from viral and cellular glycoconjugates. Cleaves off the terminal sialic acids on the glycosylated HA during virus budding to facilitate virus release. Additionally helps virus spread through the circulation by further removing sialic acids from the cell surface. These cleavages prevent self-aggregation and ensure the efficient spread of the progeny virus from cell to cell. Otherwise, infection would be limited to one round of replication. Described as a receptor-destroying enzyme because it cleaves a terminal sialic acid from the cellular receptors. May facilitate viral invasion of the upper airways by cleaving the sialic acid moieties on the mucin of the airway epithelial cells. Likely to plays a role in the budding process through its association with lipid rafts during intracellular transport. May additionally display a raft-association independent effect on budding. Plays a role in the determination of host range restriction on replication and virulence. Sialidase activity in late endosome/lysosome traffic seems to enhance virus replication. The chain is Neuraminidase from Influenza A virus (strain A/Henry/1936 H1N1).